The following is a 391-amino-acid chain: MEQMSGELHAASLLYMRRLMKCLGMLPFGQNLFSKGFCYVLLFVSLGFSSYWRFSFDYEFDYDFLNDRFSSTIDLSNFVALVLGHAIIVLELLWGNCSKDVDRQLQAIHSQIKLQLGTSNSTDRVRRYCNWIYGSLIIRWLIFIVVTIYSNRALTINATYSELVFLARFSEFTLYCAVILFIYQELIVGGSNVLDELYRTRYEMWSIRRLSLQKLAKLQAIHNSLWQAIRCLECYFQLSLITLLMKFFIDTSALPYWLYLSRVEHTRVAVQHYVATVECIKLLEIVVPCYLCTRCDAMQRKFLSMFYTVTTDRRSSQLNAALRSLNLQLSQEKYKFSAGGMVDINTEMLGKFFFGMISYIVICIQFSINFRAKKMSNEQMSQNITSTSAPI.

Over 1-31 (MEQMSGELHAASLLYMRRLMKCLGMLPFGQN) the chain is Cytoplasmic. A helical membrane pass occupies residues 32 to 52 (LFSKGFCYVLLFVSLGFSSYW). Residues 53–74 (RFSFDYEFDYDFLNDRFSSTID) lie on the Extracellular side of the membrane. Residues 75 to 95 (LSNFVALVLGHAIIVLELLWG) form a helical membrane-spanning segment. Residues 96–128 (NCSKDVDRQLQAIHSQIKLQLGTSNSTDRVRRY) are Cytoplasmic-facing. The helical transmembrane segment at 129 to 149 (CNWIYGSLIIRWLIFIVVTIY) threads the bilayer. Residues 150–173 (SNRALTINATYSELVFLARFSEFT) are Extracellular-facing. Asn-157 is a glycosylation site (N-linked (GlcNAc...) asparagine). The chain crosses the membrane as a helical span at residues 174–194 (LYCAVILFIYQELIVGGSNVL). The Cytoplasmic segment spans residues 195–239 (DELYRTRYEMWSIRRLSLQKLAKLQAIHNSLWQAIRCLECYFQLS). A helical membrane pass occupies residues 240 to 260 (LITLLMKFFIDTSALPYWLYL). Residues 261-272 (SRVEHTRVAVQH) lie on the Extracellular side of the membrane. A helical membrane pass occupies residues 273 to 293 (YVATVECIKLLEIVVPCYLCT). At 294–347 (RCDAMQRKFLSMFYTVTTDRRSSQLNAALRSLNLQLSQEKYKFSAGGMVDINTE) the chain is on the cytoplasmic side. The chain crosses the membrane as a helical span at residues 348–368 (MLGKFFFGMISYIVICIQFSI). Residues 369–391 (NFRAKKMSNEQMSQNITSTSAPI) lie on the Extracellular side of the membrane. Asn-383 is a glycosylation site (N-linked (GlcNAc...) asparagine).

It belongs to the insect chemoreceptor superfamily. Gustatory receptor (GR) family. Gr2a subfamily.

The protein localises to the cell membrane. Probable gustatory receptor which mediates acceptance or avoidance behavior, depending on its substrates. This chain is Putative gustatory receptor 98a (Gr98a), found in Drosophila melanogaster (Fruit fly).